Reading from the N-terminus, the 168-residue chain is Small ribosomal subunit protein uS4 (168 aa).

Residues 103–167 (RRLQTIVYKK…SPFKKSIEEK (65 aa)) enclose the S4 RNA-binding domain.

The protein belongs to the universal ribosomal protein uS4 family. As to quaternary structure, part of the 30S ribosomal subunit. Contacts protein S5. The interaction surface between S4 and S5 is involved in control of translational fidelity.

Functionally, one of the primary rRNA binding proteins, it binds directly to 16S rRNA where it nucleates assembly of the body of the 30S subunit. In terms of biological role, with S5 and S12 plays an important role in translational accuracy. In Staphylothermus marinus (strain ATCC 43588 / DSM 3639 / JCM 9404 / F1), this protein is Small ribosomal subunit protein uS4.